Consider the following 109-residue polypeptide: uncharacterized protein (109 aa).

This sequence to E.coli YtfG C-terminal region.

This is an uncharacterized protein from Haemophilus influenzae (strain ATCC 51907 / DSM 11121 / KW20 / Rd).